Here is a 295-residue protein sequence, read N- to C-terminus: Protoheme IX farnesyltransferase (295 aa).

Helical transmembrane passes span 8–28 (VTKPGIIFGNLISVIGGFLLA), 35–55 (YPLFVWTLLGVSLVVASGCVF), 84–104 (ASLVYATLLGIAGFMLLWFGA), 107–127 (LACWLGVMGFVVYVGVYSLYM), 132–152 (VYGTLIGSLSGAAPPVIGYCA), 162–182 (AILLAIFSLWQMPHSYAIAIF), 208–228 (ITLYIVAFAVATLMLSLGGYA), 233–253 (LVVAAAVSVWWLGMALRGYKV), and 264–284 (FVFSIVAITALSVMMSVDFMV).

This sequence belongs to the UbiA prenyltransferase family. Protoheme IX farnesyltransferase subfamily.

It is found in the cell inner membrane. It catalyses the reaction heme b + (2E,6E)-farnesyl diphosphate + H2O = Fe(II)-heme o + diphosphate. It participates in porphyrin-containing compound metabolism; heme O biosynthesis; heme O from protoheme: step 1/1. Functionally, converts heme B (protoheme IX) to heme O by substitution of the vinyl group on carbon 2 of heme B porphyrin ring with a hydroxyethyl farnesyl side group. This chain is Protoheme IX farnesyltransferase, found in Klebsiella pneumoniae subsp. pneumoniae (strain ATCC 700721 / MGH 78578).